The chain runs to 380 residues: MESPIQIFRGEPGPTCAPSACLLPNSSSWFPNWAESDSNGSVGSEDQQLEPAHISPAIPVIITAVYSVVFVVGLVGNSLVMFVIIRYTKMKTATNIYIFNLALADALVTTTMPFQSAVYLMNSWPFGDVLCKIVISIDYYNMFTSIFTLTMMSVDRYIAVCHPVKALDFRTPLKAKIINICIWLLASSVGISAIVLGGTKVREDVDVIECSLQFPDDEYSWWDLFMKICVFVFAFVIPVLIIIVCYTLMILRLKSVRLLSGSREKDRNLRRITKLVLVVVAVFIICWTPIHIFILVEALGSTSHSTAVLSSYYFCIALGYTNSSLNPVLYAFLDENFKRCFRDFCFPIKMRMERQSTNRVRNTVQDPASMRDVGGMNKPV.

Over 1–57 the chain is Extracellular; it reads MESPIQIFRGEPGPTCAPSACLLPNSSSWFPNWAESDSNGSVGSEDQQLEPAHISPA. N-linked (GlcNAc...) asparagine glycans are attached at residues Asn25 and Asn39. The chain crosses the membrane as a helical span at residues 58-85; the sequence is IPVIITAVYSVVFVVGLVGNSLVMFVII. Residues 86–95 are Cytoplasmic-facing; that stretch reads RYTKMKTATN. A helical transmembrane segment spans residues 96–119; it reads IYIFNLALADALVTTTMPFQSAVY. Residues 120-132 lie on the Extracellular side of the membrane; the sequence is LMNSWPFGDVLCK. Cys131 and Cys210 form a disulfide bridge. The helical transmembrane segment at 133–154 threads the bilayer; that stretch reads IVISIDYYNMFTSIFTLTMMSV. Residues 155–173 lie on the Cytoplasmic side of the membrane; that stretch reads DRYIAVCHPVKALDFRTPL. A helical membrane pass occupies residues 174–196; sequence KAKIINICIWLLASSVGISAIVL. Residues 197–222 are Extracellular-facing; the sequence is GGTKVREDVDVIECSLQFPDDEYSWW. The chain crosses the membrane as a helical span at residues 223–247; sequence DLFMKICVFVFAFVIPVLIIIVCYT. Residues 248-274 lie on the Cytoplasmic side of the membrane; it reads LMILRLKSVRLLSGSREKDRNLRRITK. The chain crosses the membrane as a helical span at residues 275 to 296; it reads LVLVVVAVFIICWTPIHIFILV. Residues 297-311 lie on the Extracellular side of the membrane; it reads EALGSTSHSTAVLSS. A helical transmembrane segment spans residues 312–333; that stretch reads YYFCIALGYTNSSLNPVLYAFL. Over 334 to 380 the chain is Cytoplasmic; that stretch reads DENFKRCFRDFCFPIKMRMERQSTNRVRNTVQDPASMRDVGGMNKPV. Residue Cys345 is the site of S-palmitoyl cysteine attachment.

It belongs to the G-protein coupled receptor 1 family. As to quaternary structure, interacts with NHERF1. Interacts with GABARAPL1.

It localises to the cell membrane. Its function is as follows. G-protein coupled opioid receptor that functions as a receptor for endogenous alpha-neoendorphins and dynorphins, but has low affinity for beta-endorphins. Also functions as a receptor for various synthetic opioids and for the psychoactive diterpene salvinorin A. Ligand binding causes a conformation change that triggers signaling via guanine nucleotide-binding proteins (G proteins) and modulates the activity of down-stream effectors, such as adenylate cyclase. Signaling leads to the inhibition of adenylate cyclase activity. Inhibits neurotransmitter release by reducing calcium ion currents and increasing potassium ion conductance. Plays a role in the perception of pain. Plays a role in mediating reduced physical activity upon treatment with synthetic opioids. Plays a role in the regulation of salivation in response to synthetic opioids. May play a role in arousal and regulation of autonomic and neuroendocrine functions. The polypeptide is Kappa-type opioid receptor (Oprk1) (Rattus norvegicus (Rat)).